The chain runs to 1128 residues: Adipocyte enhancer-binding protein 1 (1128 aa).

The first 25 residues, 1–25 (MAAVRTASLLCGLLALLALCPEGSP), serve as a signal peptide directing secretion. The tract at residues 40 to 368 (GFLSEFETQS…PRKGEELEEE (329 aa)) is disordered. The segment covering 77–109 (PRADAEAPPEKNKDKEKKGKKDKGPKAAKHLEG) has biased composition (basic and acidic residues). The span at 113–163 (PTKKPKEKPPKATKKPKEKPPKATKKPKEKPPKATKKPKEKPPKATKRPSA) shows a compositional bias: basic residues. Polar residues-rich tracts occupy residues 178–187 (RSLTSPSNPG) and 198–209 (TSLNTWQGQGEE). Residues 249-261 (RQKQPRPTPSRKR) are compositionally biased toward basic residues. Composition is skewed to basic and acidic residues over residues 267–282 (PEEK…EVDP) and 327–363 (EELK…RKGE). Residues 375–532 (IKCPPIGMES…LCMRLEVLGC (158 aa)) enclose the F5/8 type C domain. A required for DNA-binding and interaction with NFKBIA region spans residues 382–547 (MESHRIEDNQ…YSYYAQNEVV (166 aa)). 2 interaction with MAPK1 and MAPK3 regions span residues 413–616 (AGAN…TAGM) and 998–1128 (DPSR…FGDF). Asn-520 is a glycosylation site (N-linked (GlcNAc...) asparagine). The interval 547-977 (VTTDSLDFRH…TQCNFILARS (431 aa)) is interaction with PTEN. Residues 555–896 (RHHSYKDMRQ…EALLTFMEQV (342 aa)) form the Peptidase M14 domain. The segment at 933-1128 (DYWRILNPGE…ETYTVNFGDF (196 aa)) is required for transcriptional repression. The disordered stretch occupies residues 1027–1056 (LRRLNSTTGPATSPTPALTLPPSPTPGSTS). The segment covering 1030-1044 (LNSTTGPATSPTPAL) has biased composition (low complexity).

Belongs to the peptidase M14 family. Interacts with different types of collagen, including collagens I, III, and V. Interacts with GNG5, NFKBIA, MAPK1, MAPK3 and PTEN. May interact with calmodulin. Interaction with MAPK1 may stimulate DNA-binding. Binds to DNA in vitro. Post-translationally, phosphorylated by MAPK1 in vitro. In terms of tissue distribution, expressed in aorta.

Its subcellular location is the secreted. In terms of biological role, as a positive regulator of collagen fibrillogenesis, it is probably involved in the organization and remodeling of the extracellular matrix. May positively regulate MAP-kinase activity in adipocytes, leading to enhanced adipocyte proliferation and reduced adipocyte differentiation. May also positively regulate NF-kappa-B activity in macrophages by promoting the phosphorylation and subsequent degradation of I-kappa-B-alpha (NFKBIA), leading to enhanced macrophage inflammatory responsiveness. Can act as a transcriptional repressor. This is Adipocyte enhancer-binding protein 1 (Aebp1) from Rattus norvegicus (Rat).